An 87-amino-acid chain; its full sequence is Tektin-2 (87 aa).

Positions 26-55 form a coiled coil; sequence VEEELLKEVEVIEATKKALQQRVSQAFQQL.

Belongs to the tektin family. In terms of assembly, microtubule inner protein component of sperm flagellar doublet microtubules. May interact with CCDC172. Post-translationally, tyrosine phosphorylated. Ubiquitinated, leading to its degradation. Deubiquitinated by USP16, promoting its stability. In terms of tissue distribution, detected in sperm flagella (at protein level).

It localises to the cytoplasm. The protein resides in the cytoskeleton. The protein localises to the cilium axoneme. Its subcellular location is the flagellum axoneme. It is found in the microtubule organizing center. Functionally, microtubule inner protein (MIP) part of the dynein-decorated doublet microtubules (DMTs) in cilia and flagellar axoneme. Plays a key role in the assembly or attachment of the inner dynein arm to microtubules in sperm flagella and tracheal cilia. Forms filamentous polymers in the walls of ciliary and flagellar microtubules. In Mesocricetus auratus (Golden hamster), this protein is Tektin-2.